We begin with the raw amino-acid sequence, 361 residues long: Chorismate synthase (361 aa).

Positions 48 and 54 each coordinate NADP(+). Residues 125–127 (RSS), 238–239 (NA), Gly278, 293–297 (KPTSS), and Arg319 contribute to the FMN site.

It belongs to the chorismate synthase family. Homotetramer. It depends on FMNH2 as a cofactor.

The enzyme catalyses 5-O-(1-carboxyvinyl)-3-phosphoshikimate = chorismate + phosphate. It functions in the pathway metabolic intermediate biosynthesis; chorismate biosynthesis; chorismate from D-erythrose 4-phosphate and phosphoenolpyruvate: step 7/7. In terms of biological role, catalyzes the anti-1,4-elimination of the C-3 phosphate and the C-6 proR hydrogen from 5-enolpyruvylshikimate-3-phosphate (EPSP) to yield chorismate, which is the branch point compound that serves as the starting substrate for the three terminal pathways of aromatic amino acid biosynthesis. This reaction introduces a second double bond into the aromatic ring system. The protein is Chorismate synthase of Salmonella arizonae (strain ATCC BAA-731 / CDC346-86 / RSK2980).